A 133-amino-acid chain; its full sequence is Histone H2A.1 (133 aa).

The tract at residues 1–23 (MSTTGKGGKAKGKTASSKQVSRS) is disordered. At Ser-2 the chain carries N-acetylserine. An N6-acetyllysine mark is found at Lys-6, Lys-9, Lys-11, Lys-13, and Lys-18. Ser-123 bears the Phosphoserine mark. Lys-124 is covalently cross-linked (Glycyl lysine isopeptide (Lys-Gly) (interchain with G-Cter in ubiquitin)). Ser-129 carries the phosphoserine modification.

Belongs to the histone H2A family. As to quaternary structure, the nucleosome is a histone octamer containing two molecules each of H2A, H2B, H3 and H4 assembled in one H3-H4 heterotetramer and two H2A-H2B heterodimers. The octamer wraps approximately 147 bp of DNA. Post-translationally, monoubiquitination of Lys-124 gives a specific tag for epigenetic transcriptional repression. In terms of processing, acetylation occurs almost exclusively in the MAC.

The protein localises to the nucleus. It is found in the chromosome. In terms of biological role, core component of nucleosome. Nucleosomes wrap and compact DNA into chromatin, limiting DNA accessibility to the cellular machineries which require DNA as a template. Histones thereby play a central role in transcription regulation, DNA repair, DNA replication and chromosomal stability. DNA accessibility is regulated via a complex set of post-translational modifications of histones, also called histone code, and nucleosome remodeling. The sequence is that of Histone H2A.1 (HTA2) from Tetrahymena pyriformis.